The sequence spans 581 residues: uncharacterized protein (581 aa).

It belongs to the UbiD family.

This is an uncharacterized protein from Chlamydia caviae (strain ATCC VR-813 / DSM 19441 / 03DC25 / GPIC) (Chlamydophila caviae).